The following is a 930-amino-acid chain: Isoleucine--tRNA ligase (930 aa).

The 'HIGH' region signature appears at 57-67 (PYANGHIHLGT). Residue Glu-559 participates in L-isoleucyl-5'-AMP binding. Positions 600 to 604 (KMSKS) match the 'KMSKS' region motif. Lys-603 contributes to the ATP binding site. Positions 899, 902, 918, and 921 each coordinate Zn(2+).

The protein belongs to the class-I aminoacyl-tRNA synthetase family. IleS type 1 subfamily. As to quaternary structure, monomer. It depends on Zn(2+) as a cofactor.

It is found in the cytoplasm. The catalysed reaction is tRNA(Ile) + L-isoleucine + ATP = L-isoleucyl-tRNA(Ile) + AMP + diphosphate. In terms of biological role, catalyzes the attachment of isoleucine to tRNA(Ile). As IleRS can inadvertently accommodate and process structurally similar amino acids such as valine, to avoid such errors it has two additional distinct tRNA(Ile)-dependent editing activities. One activity is designated as 'pretransfer' editing and involves the hydrolysis of activated Val-AMP. The other activity is designated 'posttransfer' editing and involves deacylation of mischarged Val-tRNA(Ile). This chain is Isoleucine--tRNA ligase, found in Desulforudis audaxviator (strain MP104C).